The sequence spans 278 residues: Shikimate dehydrogenase (NADP(+)) (278 aa).

Residues 15-17 (SMS) and Thr-62 each bind shikimate. Lys-66 functions as the Proton acceptor in the catalytic mechanism. Glu-78 serves as a coordination point for NADP(+). The shikimate site is built by Asn-87 and Asp-102. NADP(+) contacts are provided by residues 127–131 (GAGGA), 151–156 (NRTPEK), and Ile-217. Tyr-219 serves as a coordination point for shikimate. NADP(+) is bound at residue Gly-240.

Belongs to the shikimate dehydrogenase family. As to quaternary structure, homodimer.

The enzyme catalyses shikimate + NADP(+) = 3-dehydroshikimate + NADPH + H(+). It participates in metabolic intermediate biosynthesis; chorismate biosynthesis; chorismate from D-erythrose 4-phosphate and phosphoenolpyruvate: step 4/7. Involved in the biosynthesis of the chorismate, which leads to the biosynthesis of aromatic amino acids. Catalyzes the reversible NADPH linked reduction of 3-dehydroshikimate (DHSA) to yield shikimate (SA). The sequence is that of Shikimate dehydrogenase (NADP(+)) from Bacillus licheniformis (strain ATCC 14580 / DSM 13 / JCM 2505 / CCUG 7422 / NBRC 12200 / NCIMB 9375 / NCTC 10341 / NRRL NRS-1264 / Gibson 46).